Consider the following 468-residue polypeptide: Chromosomal replication initiator protein DnaA (468 aa).

A domain I, interacts with DnaA modulators region spans residues 1-84 (MSSSLWLQCM…RFEVGSRPVA (84 aa)). Residues 81–113 (RPVAAPKPAPTRTPADVAAESSAPAQLQARKPV) form a disordered region. Residues 84 to 131 (AAPKPAPTRTPADVAAESSAPAQLQARKPVHKTWDDDAQAIADINHRS) are domain II. Residues 132–348 (NVNPKHKFNN…GALNRVIANA (217 aa)) form a domain III, AAA+ region region. Residues Gly-176, Gly-178, Lys-179, and Thr-180 each contribute to the ATP site. The tract at residues 349–468 (NFTGRPITID…YSNLIRTLSS (120 aa)) is domain IV, binds dsDNA.

This sequence belongs to the DnaA family. In terms of assembly, oligomerizes as a right-handed, spiral filament on DNA at oriC.

The protein localises to the cytoplasm. Plays an essential role in the initiation and regulation of chromosomal replication. ATP-DnaA binds to the origin of replication (oriC) to initiate formation of the DNA replication initiation complex once per cell cycle. Binds the DnaA box (a 9 base pair repeat at the origin) and separates the double-stranded (ds)DNA. Forms a right-handed helical filament on oriC DNA; dsDNA binds to the exterior of the filament while single-stranded (ss)DNA is stabiized in the filament's interior. The ATP-DnaA-oriC complex binds and stabilizes one strand of the AT-rich DNA unwinding element (DUE), permitting loading of DNA polymerase. After initiation quickly degrades to an ADP-DnaA complex that is not apt for DNA replication. Binds acidic phospholipids. The polypeptide is Chromosomal replication initiator protein DnaA (Vibrio vulnificus (strain CMCP6)).